Here is a 237-residue protein sequence, read N- to C-terminus: Probable aquaporin SIP2-1 (237 aa).

A run of 6 helical transmembrane segments spans residues 15–35, 39–59, 71–91, 122–142, 169–189, and 202–222; these read FMWI…LGFS, PSGE…FAYL, LTAL…SVFV, VAIH…VLLS, ILGS…GWAY, and VYWL…KVVF. An NPA 1 motif is present at residues 69 to 71; that stretch reads NPL. The NPA 2 motif lies at 180–182; it reads NPA.

This sequence belongs to the MIP/aquaporin (TC 1.A.8) family. SIP (TC 1.A.8.10) subfamily. Expressed in dividing cells and elongating regions of the root tips, emerging lateral roots, root steles, cotyledons, main veins of the rosette leaves, vascular tissues of the flower petals, stigma, stamens (anthers and filaments), pollen and the top and bottom (receptacle) of siliques.

It localises to the endoplasmic reticulum membrane. Functionally, water channel required to facilitate the transport of water across cell membrane. Inactive in yeast cells. In Arabidopsis thaliana (Mouse-ear cress), this protein is Probable aquaporin SIP2-1 (SIP2-1).